The sequence spans 112 residues: Flowering-promoting factor 1-like protein 2 (112 aa).

Belongs to the FPF1 family. In terms of tissue distribution, expressed in leaves and in some parts of the flowers, mainly in the sepals.

In terms of biological role, modulates the competence to flowering of apical meristems. This Arabidopsis thaliana (Mouse-ear cress) protein is Flowering-promoting factor 1-like protein 2 (FLP2).